A 149-amino-acid polypeptide reads, in one-letter code: Nucleoside diphosphate kinase (149 aa).

Residues K9, F57, R85, T91, R102, and N112 each contribute to the ATP site. The active-site Pros-phosphohistidine intermediate is the H115.

The protein belongs to the NDK family. As to quaternary structure, homotetramer. Mg(2+) serves as cofactor.

Its subcellular location is the cytoplasm. It carries out the reaction a 2'-deoxyribonucleoside 5'-diphosphate + ATP = a 2'-deoxyribonucleoside 5'-triphosphate + ADP. The enzyme catalyses a ribonucleoside 5'-diphosphate + ATP = a ribonucleoside 5'-triphosphate + ADP. Major role in the synthesis of nucleoside triphosphates other than ATP. The ATP gamma phosphate is transferred to the NDP beta phosphate via a ping-pong mechanism, using a phosphorylated active-site intermediate. The sequence is that of Nucleoside diphosphate kinase from Thermomicrobium roseum (strain ATCC 27502 / DSM 5159 / P-2).